A 404-amino-acid polypeptide reads, in one-letter code: Probable tRNA sulfurtransferase (404 aa).

The THUMP domain occupies 60 to 165 (TAVAESLKQV…EEAAYLSYET (106 aa)). ATP contacts are provided by residues 183 to 184 (ML), 208 to 209 (HF), arginine 265, glycine 287, and glutamine 296.

Belongs to the ThiI family.

It localises to the cytoplasm. The catalysed reaction is [ThiI sulfur-carrier protein]-S-sulfanyl-L-cysteine + a uridine in tRNA + 2 reduced [2Fe-2S]-[ferredoxin] + ATP + H(+) = [ThiI sulfur-carrier protein]-L-cysteine + a 4-thiouridine in tRNA + 2 oxidized [2Fe-2S]-[ferredoxin] + AMP + diphosphate. The enzyme catalyses [ThiS sulfur-carrier protein]-C-terminal Gly-Gly-AMP + S-sulfanyl-L-cysteinyl-[cysteine desulfurase] + AH2 = [ThiS sulfur-carrier protein]-C-terminal-Gly-aminoethanethioate + L-cysteinyl-[cysteine desulfurase] + A + AMP + 2 H(+). It participates in cofactor biosynthesis; thiamine diphosphate biosynthesis. Functionally, catalyzes the ATP-dependent transfer of a sulfur to tRNA to produce 4-thiouridine in position 8 of tRNAs, which functions as a near-UV photosensor. Also catalyzes the transfer of sulfur to the sulfur carrier protein ThiS, forming ThiS-thiocarboxylate. This is a step in the synthesis of thiazole, in the thiamine biosynthesis pathway. The sulfur is donated as persulfide by IscS. The polypeptide is Probable tRNA sulfurtransferase (Streptococcus pneumoniae serotype 19F (strain G54)).